The primary structure comprises 180 residues: UPF0227 protein YcfP (180 aa).

The protein belongs to the UPF0227 family.

The protein is UPF0227 protein YcfP of Salmonella agona (strain SL483).